A 178-amino-acid chain; its full sequence is CASP-like protein 2A2 (178 aa).

At 1 to 22 (MDKTDQTAIDESALVLNRTEKS) the chain is on the cytoplasmic side. Residues 23–43 (AEAVLRVASMALSITGLVIMI) traverse the membrane as a helical segment. Residues 44–69 (KNSISNEFGSVSYSNIGAFMYLVSAN) are Extracellular-facing. The chain crosses the membrane as a helical span at residues 70 to 90 (GVCAAYSLLSALAILALPCPI). The Cytoplasmic segment spans residues 91-96 (SKVQVR). Residues 97–117 (TLFLLDQVVTYVVLAAGAVSA) form a helical membrane-spanning segment. The Extracellular portion of the chain corresponds to 118–145 (ETVYLAYYGNIPITWSSACDSYGSFCHN). A helical membrane pass occupies residues 146-166 (ALISVVFTFVVSLLYMLLSLI). The Cytoplasmic portion of the chain corresponds to 167 to 178 (SSYRLFTRFEAP).

Belongs to the Casparian strip membrane proteins (CASP) family. As to quaternary structure, homodimer and heterodimers. As to expression, mostly expressed in flowers and buds and, to a lower extent, in roots and yellow siliques. Localized in the floral organ abscission zone.

The protein localises to the cell membrane. Its function is as follows. Involved in floral organ shedding. The sequence is that of CASP-like protein 2A2 from Arabidopsis thaliana (Mouse-ear cress).